A 205-amino-acid chain; its full sequence is Thymidylate kinase (205 aa).

10–17 (GIDGAGKS) provides a ligand contact to ATP.

Belongs to the thymidylate kinase family.

The enzyme catalyses dTMP + ATP = dTDP + ADP. In terms of biological role, phosphorylation of dTMP to form dTDP in both de novo and salvage pathways of dTTP synthesis. This Ralstonia pickettii (strain 12J) protein is Thymidylate kinase.